Reading from the N-terminus, the 207-residue chain is HTH-type transcriptional regulator AqdR (207 aa).

Residues Ala-16–Glu-76 form the HTH tetR-type domain. Positions Gly-39–Trp-58 form a DNA-binding region, H-T-H motif.

Functionally, may regulate the expression of genes involved in the degradation of the Pseudomonas aeruginosa quorum sensing signal molecules HHQ (2-heptyl-4-quinolone) and PQS (2-heptyl-3-hydroxy-4-quinolone). The chain is HTH-type transcriptional regulator AqdR from Rhodococcus erythropolis (Arthrobacter picolinophilus).